Reading from the N-terminus, the 435-residue chain is Ribulose bisphosphate carboxylase/oxygenase activase 2, chloroplastic (435 aa).

The transit peptide at 1–56 (MAAAYSTVGAVNRAPLSLNGSGARASLVPSTAFFGSSLKKSAAKFPKASSGNFKIV) directs the protein to the chloroplast. 165-172 (GGKGQGKS) contacts ATP.

Belongs to the RuBisCO activase family.

The protein localises to the plastid. It is found in the chloroplast stroma. In terms of biological role, activation of RuBisCO (ribulose-1,5-bisphosphate carboxylase/oxygenase; EC 4.1.1.39) involves the ATP-dependent carboxylation of the epsilon-amino group of lysine leading to a carbamate structure. In Larrea tridentata (Creosote bush), this protein is Ribulose bisphosphate carboxylase/oxygenase activase 2, chloroplastic (RCA2).